Here is a 172-residue protein sequence, read N- to C-terminus: Ribosome maturation factor RimM (172 aa).

A PRC barrel domain is found at 93–167 (DEHEFYYHEI…RVVITPIPGM (75 aa)).

This sequence belongs to the RimM family. As to quaternary structure, binds ribosomal protein uS19.

The protein resides in the cytoplasm. An accessory protein needed during the final step in the assembly of 30S ribosomal subunit, possibly for assembly of the head region. Essential for efficient processing of 16S rRNA. May be needed both before and after RbfA during the maturation of 16S rRNA. It has affinity for free ribosomal 30S subunits but not for 70S ribosomes. This chain is Ribosome maturation factor RimM, found in Exiguobacterium sp. (strain ATCC BAA-1283 / AT1b).